The sequence spans 251 residues: Phosphate import ATP-binding protein PstB 2 (251 aa).

Positions 5 to 246 (LTTENLSLFY…PVKQETNDYI (242 aa)) constitute an ABC transporter domain. An ATP-binding site is contributed by 37–44 (GPSGCGKS).

This sequence belongs to the ABC transporter superfamily. Phosphate importer (TC 3.A.1.7) family. The complex is composed of two ATP-binding proteins (PstB), two transmembrane proteins (PstC and PstA) and a solute-binding protein (PstS).

It localises to the cell membrane. The catalysed reaction is phosphate(out) + ATP + H2O = ADP + 2 phosphate(in) + H(+). In terms of biological role, part of the ABC transporter complex PstSACB involved in phosphate import. Responsible for energy coupling to the transport system. In Lactiplantibacillus plantarum (strain ATCC BAA-793 / NCIMB 8826 / WCFS1) (Lactobacillus plantarum), this protein is Phosphate import ATP-binding protein PstB 2.